Reading from the N-terminus, the 505-residue chain is Salutaridine synthase (505 aa).

A helical transmembrane segment spans residues 10–30; the sequence is DFWMIACTVIIVFALVKFMFS. Cys444 is a heme binding site.

It belongs to the cytochrome P450 family. The cofactor is heme.

It is found in the endoplasmic reticulum membrane. The catalysed reaction is (R)-reticuline + reduced [NADPH--hemoprotein reductase] + O2 = salutaridine + oxidized [NADPH--hemoprotein reductase] + 2 H2O + H(+). Cytochrome P450 monooxygenase involved in biosynthesis of morphinan-type benzylisoquinoline and opiate alkaloids natural products. Catalyzes the formation of the morphinan alkaloid salutaridine by intramolecular phenol oxidation of (R)-reticuline without the incorporation of oxygen into the product. Can also use (R)-norreticuline as substrate. The polypeptide is Salutaridine synthase (Papaver somniferum (Opium poppy)).